Reading from the N-terminus, the 252-residue chain is Uridylate kinase (252 aa).

Residue 23–26 participates in ATP binding; the sequence is KLSG. UMP is bound at residue G65. ATP-binding residues include G66 and R70. Residues D85 and 146 to 153 contribute to the UMP site; that span reads LGAPFFST. Positions 173, 174, 179, and 182 each coordinate ATP.

The protein belongs to the UMP kinase family. In terms of assembly, homohexamer.

The protein localises to the cytoplasm. It catalyses the reaction UMP + ATP = UDP + ADP. It participates in pyrimidine metabolism; CTP biosynthesis via de novo pathway; UDP from UMP (UMPK route): step 1/1. With respect to regulation, inhibited by UTP. Its function is as follows. Catalyzes the reversible phosphorylation of UMP to UDP. In Thermobifida fusca (strain YX), this protein is Uridylate kinase.